The sequence spans 533 residues: Trigger factor (533 aa).

The PPIase FKBP-type domain maps to 164–249; it reads GDQLIIDFTG…VKQVKVETDT (86 aa). The segment at 436-533 is disordered; it reads EAAIEAEAEE…APAKKPAAKK (98 aa). Residues 465 to 477 show a composition bias toward basic residues; it reads AAAKKAPAKKAPA. Over residues 481–490 the composition is skewed to basic and acidic residues; it reads AAKDGDEKPA. 2 stretches are compositionally biased toward basic residues: residues 494-506 and 515-533; these read APAKKAPAKKAST and PAKKPAAKKAPAKKPAAKK.

This sequence belongs to the FKBP-type PPIase family. Tig subfamily.

It localises to the cytoplasm. The enzyme catalyses [protein]-peptidylproline (omega=180) = [protein]-peptidylproline (omega=0). Its function is as follows. Involved in protein export. Acts as a chaperone by maintaining the newly synthesized protein in an open conformation. Functions as a peptidyl-prolyl cis-trans isomerase. The chain is Trigger factor from Erythrobacter litoralis (strain HTCC2594).